The chain runs to 143 residues: Ribosome maturation factor RimP (143 aa).

It belongs to the RimP family.

It is found in the cytoplasm. Required for maturation of 30S ribosomal subunits. The sequence is that of Ribosome maturation factor RimP from Neisseria gonorrhoeae (strain ATCC 700825 / FA 1090).